Here is a 664-residue protein sequence, read N- to C-terminus: Xyloglucan-specific galacturonosyltransferase 1 (664 aa).

A compositionally biased stretch (basic residues) spans Met1 to Asn21. The interval Met1–Leu49 is disordered. Residues Met1 to Arg71 are Cytoplasmic-facing. Residues Val72–Ile92 form a helical; Signal-anchor for type II membrane protein membrane-spanning segment. Over Ser93–Val664 the chain is Lumenal. 7 N-linked (GlcNAc...) asparagine glycosylation sites follow: Asn126, Asn158, Asn175, Asn181, Asn355, Asn379, and Asn522.

Belongs to the glycosyltransferase 47 family. As to expression, root hair specific. Expressed in roots and young leaves.

It is found in the golgi apparatus membrane. Xyloglucan-specific galacturonosyltransferase that forms the beta-D-galactosyluronic acid-(1-&gt;2)-alpha-D-xylosyl linkage. Required for root hair development probably by providing important acidic xyloglucans. This Arabidopsis thaliana (Mouse-ear cress) protein is Xyloglucan-specific galacturonosyltransferase 1.